The sequence spans 425 residues: Putative nucleoside transporter YegT (425 aa).

Over 1-8 the chain is Periplasmic; sequence MKTTAKLS. Residues 9 to 29 form a helical membrane-spanning segment; the sequence is FMMFVEWFIWGAWFVPLWLWL. Over 30-38 the chain is Cytoplasmic; that stretch reads SKSGFSAGE. The helical transmembrane segment at 39–59 threads the bilayer; it reads IGWSYACTAIAAILSPILVGS. The Periplasmic portion of the chain corresponds to 60 to 63; that stretch reads ITDR. Residues 64-84 traverse the membrane as a helical segment; sequence FFSAQKVLAVLMFAGALLMYF. Residues 85–90 lie on the Cytoplasmic side of the membrane; it reads AAQQTT. Residues 91-111 form a helical membrane-spanning segment; the sequence is FAGFFPLLLAYSLTYMPTIAL. Topologically, residues 112-131 are periplasmic; sequence TNSIAFANVPDVERDFPRIR. Residues 132–152 form a helical membrane-spanning segment; that stretch reads VMGTIGWIASGLACGFLPQIL. Over 153–161 the chain is Cytoplasmic; the sequence is GYADISPTN. A helical transmembrane segment spans residues 162-182; it reads IPLLITAGSSALLGVFAFFLP. Topologically, residues 183–210 are periplasmic; that stretch reads DTPPKSTGKMDIKVMLGLDALILLRDKN. Residues 211–231 traverse the membrane as a helical segment; the sequence is FLVFFFCSFLFAMPLAFYYIF. Residues 232–244 are Cytoplasmic-facing; it reads ANGYLTEVGMKNA. A helical transmembrane segment spans residues 245 to 265; it reads TGWMTLGQFSEIFFMLALPFF. At 266 to 287 the chain is on the periplasmic side; the sequence is TKRFGIKKVLLLGLVTAAIRYG. The helical transmembrane segment at 288 to 308 threads the bilayer; the sequence is FFIYGSADEYFTYALLFLGIL. At 309 to 339 the chain is on the cytoplasmic side; that stretch reads LHGVSYDFYYVTAYIYVDKKAPVHMRTAAQG. A helical membrane pass occupies residues 340 to 360; it reads LITLCCQGFGSLLGYRLGGVM. Residues 361–379 are Periplasmic-facing; sequence MEKMFAYQEPVNGLTFNWS. A helical transmembrane segment spans residues 380–400; sequence GMWTFGAVMIAIIAVLFMIFF. Residues 401–425 are Cytoplasmic-facing; it reads RESDNEITAIKVDDRDIALTQGEVK.

Belongs to the major facilitator superfamily. Nucleoside:H(+) symporter (NHS) (TC 2.A.1.10) family.

It localises to the cell inner membrane. Could be involved in nucleoside transport. The polypeptide is Putative nucleoside transporter YegT (yegT) (Escherichia coli (strain K12)).